The primary structure comprises 194 residues: UPF0301 protein FTH_1193 (194 aa).

This sequence belongs to the UPF0301 (AlgH) family.

The protein is UPF0301 protein FTH_1193 of Francisella tularensis subsp. holarctica (strain OSU18).